The primary structure comprises 139 residues: Plastocyanin (139 aa).

Residues 1–34 (MKLIAASLRRLSLAVLTVLLVVSSFAVFTPSASA) form the signal peptide. The Plastocyanin-like domain occupies 35 to 139 (ETYTVKLGSD…GMVGKITVAG (105 aa)). Cu cation-binding residues include H73, C123, H126, and M131.

It belongs to the plastocyanin family. The cofactor is Cu(2+).

The protein localises to the cellular thylakoid membrane. In terms of biological role, participates in electron transfer between P700 and the cytochrome b6-f complex in photosystem I. This chain is Plastocyanin (petE), found in Nostoc sp. (strain PCC 7120 / SAG 25.82 / UTEX 2576).